The sequence spans 620 residues: 1-deoxy-D-xylulose-5-phosphate synthase (620 aa).

Residues His80 and Gly121–Ser123 contribute to the thiamine diphosphate site. Mg(2+) is bound at residue Asp152. Residues Gly153–Ala154, Asn181, Tyr288, and Glu370 each bind thiamine diphosphate. Mg(2+) is bound at residue Asn181.

Belongs to the transketolase family. DXPS subfamily. Homodimer. Requires Mg(2+) as cofactor. Thiamine diphosphate serves as cofactor.

It catalyses the reaction D-glyceraldehyde 3-phosphate + pyruvate + H(+) = 1-deoxy-D-xylulose 5-phosphate + CO2. Its pathway is metabolic intermediate biosynthesis; 1-deoxy-D-xylulose 5-phosphate biosynthesis; 1-deoxy-D-xylulose 5-phosphate from D-glyceraldehyde 3-phosphate and pyruvate: step 1/1. Functionally, catalyzes the acyloin condensation reaction between C atoms 2 and 3 of pyruvate and glyceraldehyde 3-phosphate to yield 1-deoxy-D-xylulose-5-phosphate (DXP). This chain is 1-deoxy-D-xylulose-5-phosphate synthase, found in Salmonella agona (strain SL483).